The primary structure comprises 90 residues: UPF0213 protein lin0209 (90 aa).

Residues 5-80 (NEHFFYVLKC…KKLSRKNKDS (76 aa)) enclose the GIY-YIG domain.

It belongs to the UPF0213 family.

This Listeria innocua serovar 6a (strain ATCC BAA-680 / CLIP 11262) protein is UPF0213 protein lin0209.